The sequence spans 1120 residues: ELKS/Rab6-interacting/CAST family member 1 (1120 aa).

The tract at residues 1-54 is disordered; that stretch reads MYGSARSVGKVEPSSQSPGRSPRLPRSPRLGHRRTNSTGGSSGNSVGGGSGKTL. An N6-acetyllysine modification is found at Lys-10. Residues 13–28 show a composition bias toward low complexity; it reads PSSQSPGRSPRLPRSP. Ser-17, Ser-21, and Ser-37 each carry phosphoserine. Thr-38 is modified (phosphothreonine). Over residues 40–51 the composition is skewed to gly residues; it reads GSSGNSVGGGSG. A phosphoserine mark is found at Ser-55, Ser-75, Ser-94, Ser-824, Leu-965, and Ser-1009. Positions 144–992 form a coiled coil; sequence RQARDNTIMD…RMKLMADNYE (849 aa). Residues 801 to 824 show a composition bias toward basic and acidic residues; it reads KHKEQVEKKKSAQMLEEARRREDS. Residues 801–840 form a disordered region; the sequence is KHKEQVEKKKSAQMLEEARRREDSLSDSSQQLQDSLRKKD. Thr-1050 is modified (phosphothreonine). Residues 1050–1112 enclose the FIP-RBD domain; that stretch reads TPPASYNADG…DHCPDILEQV (63 aa). A coiled-coil region spans residues 1060–1104; it reads EQAAWENELQQMTQEQLQNELEKVEGDNAELQEFANTILQQIADH.

Interacts with the GTB-bound forms of RAB6A isoform 1 and isoform 2 and with RAB6B. The interaction was strongest with RAB6B, followed by RAB6A isoform 2 and weakest with RAB6A isoform 1. Part of a complex with CHUK, IKBKB and IKBKG. Interacts with CHUK, IKBKB and IKBKG. The interaction with IKBKG is independent of CHUK and IKBKB. Interacts with NFKBIA. Isoform 2 interacts through its C-terminus with the PDZ domains of RIMS1 and RIMS2. Interacts with ERC2/CAST1. Interacts with SDCCAG8. Part of a cortical microtubule stabilization complex (CMSC) composed of KANK1, PPFIA1, PPFIBP1, ERC1/ELKS, PHLDB2/LL5beta, CLASPs, KIF21A and possibly additional interactors; within CMSCs KANK1 and PHLDB2/LL5beta appear to be the core components for targeting of microtubule-binding proteins KIF21A and CLASPs, whereas PPFIA1, PPFIBP1 and ERC1/ELKS serve as scaffolds for protein clustering. In terms of tissue distribution, widely expressed.

It is found in the cytoplasm. Its subcellular location is the cytoskeleton. The protein localises to the microtubule organizing center. It localises to the centrosome. The protein resides in the membrane. It is found in the golgi apparatus membrane. Its subcellular location is the presynaptic active zone. The protein localises to the cell projection. It localises to the podosome. Functionally, regulatory subunit of the IKK complex. Probably recruits IkappaBalpha/NFKBIA to the complex. May be involved in the organization of the cytomatrix at the nerve terminals active zone (CAZ) which regulates neurotransmitter release. May be involved in vesicle trafficking at the CAZ. May be involved in Rab-6 regulated endosomes to Golgi transport. The sequence is that of ELKS/Rab6-interacting/CAST family member 1 from Mus musculus (Mouse).